The primary structure comprises 125 residues: Large ribosomal subunit protein bL19 (125 aa).

It belongs to the bacterial ribosomal protein bL19 family.

This protein is located at the 30S-50S ribosomal subunit interface and may play a role in the structure and function of the aminoacyl-tRNA binding site. In Ehrlichia ruminantium (strain Gardel), this protein is Large ribosomal subunit protein bL19.